The following is a 321-amino-acid chain: MNRPERLQPGVKLRDADKVSRIPVKIVPSERETMLRKPDWLRVKLPASNQRILEIKQALRSNGLHSVCEEASCPNLAECFNHGTATFMILGAICTRRCPFCDVAHGRPLKPDAEEPVKLAQTIRDMKLKYVVITSVDRDDLRDGGAQHFADCIREIRKLNPEIKIEILVPDFRGRIDAALDILSTEPPDVFNHNLETAPMHYRKARPGANYQWSLDLLKRFKERHPNVPTKSGLMMGLGETNEEIAQVLRDLREHKVEMLTLGQYLQPSKFHLPVERYVSPAEFDELKVLADELGFTHAACGPLVRSSYHADLQAQGKEVK.

[4Fe-4S] cluster contacts are provided by Cys68, Cys73, Cys79, Cys94, Cys98, Cys101, and Ser308. Residues 80 to 297 enclose the Radical SAM core domain; the sequence is FNHGTATFMI…KVLADELGFT (218 aa).

It belongs to the radical SAM superfamily. Lipoyl synthase family. The cofactor is [4Fe-4S] cluster.

The protein resides in the cytoplasm. The enzyme catalyses [[Fe-S] cluster scaffold protein carrying a second [4Fe-4S](2+) cluster] + N(6)-octanoyl-L-lysyl-[protein] + 2 oxidized [2Fe-2S]-[ferredoxin] + 2 S-adenosyl-L-methionine + 4 H(+) = [[Fe-S] cluster scaffold protein] + N(6)-[(R)-dihydrolipoyl]-L-lysyl-[protein] + 4 Fe(3+) + 2 hydrogen sulfide + 2 5'-deoxyadenosine + 2 L-methionine + 2 reduced [2Fe-2S]-[ferredoxin]. It functions in the pathway protein modification; protein lipoylation via endogenous pathway; protein N(6)-(lipoyl)lysine from octanoyl-[acyl-carrier-protein]: step 2/2. Its function is as follows. Catalyzes the radical-mediated insertion of two sulfur atoms into the C-6 and C-8 positions of the octanoyl moiety bound to the lipoyl domains of lipoate-dependent enzymes, thereby converting the octanoylated domains into lipoylated derivatives. The polypeptide is Lipoyl synthase (Shewanella sp. (strain ANA-3)).